We begin with the raw amino-acid sequence, 57 residues long: High-potential iron-sulfur protein (57 aa).

Positions 21, 24, 33, and 46 each coordinate [4Fe-4S] cluster.

This sequence belongs to the high-potential iron-sulfur protein (HiPIP) family. In terms of assembly, homodimer.

Specific class of high-redox-potential 4Fe-4S ferredoxins. Functions in anaerobic electron transport in most purple and in some other photosynthetic bacteria and in at least one genus (Paracoccus) of halophilic, denitrifying bacteria. The polypeptide is High-potential iron-sulfur protein (hip) (Rhodopila globiformis (Rhodopseudomonas globiformis)).